Consider the following 323-residue polypeptide: MHILQACKGMEHRSISSLIVNQKRQFLLTATATLVGSMIMNENNRLANKMEKGQLHYKDANAIFNKALEAQESKYFSRSKSNYPGHVPLFTFEKLLMIAGSSLGAYLHPERNEFIVALGESTAITPVLTKLQTQMLSDPVGRQILRERPRITSTSLDLDKLRELPDNTIGKTYVNWLDREGVSPDTRVPVKYIDDEELAYIYQRYRECHDFYHSITGLPIIIEGEIAVKILEFMNIGIPMSGLGALFAPLRLKPSQKERLYNIYYPWGFKSGLNSKPLINVYWENILEEDINEFRHKMGIEQPPDLRNLRKKYFEELKKKKKV.

4 residues coordinate Zn(2+): His-209, Asp-210, His-213, and Glu-225.

The protein belongs to the COQ4 family. In terms of assembly, component of a multi-subunit COQ enzyme complex, composed of at least COQ3, COQ4, COQ5, COQ6, COQ7 and COQ9. Zn(2+) serves as cofactor.

It localises to the mitochondrion inner membrane. It carries out the reaction a 4-hydroxy-3-methoxy-5-(all-trans-polyprenyl)benzoate + H(+) = a 2-methoxy-6-(all-trans-polyprenyl)phenol + CO2. It functions in the pathway cofactor biosynthesis; ubiquinone biosynthesis. Its function is as follows. Lyase that catalyzes the C1-decarboxylation of 4-hydroxy-3-methoxy-5-(all-trans-polyprenyl)benzoic acid into 2-methoxy-6-(all-trans-polyprenyl)phenol during ubiquinone biosynthesis. This chain is Ubiquinone biosynthesis protein COQ4, mitochondrial, found in Debaryomyces hansenii (strain ATCC 36239 / CBS 767 / BCRC 21394 / JCM 1990 / NBRC 0083 / IGC 2968) (Yeast).